Reading from the N-terminus, the 83-residue chain is Large ribosomal subunit protein eL43 (83 aa).

Residues cysteine 38, cysteine 41, cysteine 56, and cysteine 59 each contribute to the Zn(2+) site. The C4-type zinc-finger motif lies at 38–59; that stretch reads CPVCGRRAVKRISTGIWQCTKC.

The protein belongs to the eukaryotic ribosomal protein eL43 family. Putative zinc-binding subfamily. Part of the 50S ribosomal subunit. Zn(2+) serves as cofactor.

In terms of biological role, binds to the 23S rRNA. The chain is Large ribosomal subunit protein eL43 from Pyrococcus horikoshii (strain ATCC 700860 / DSM 12428 / JCM 9974 / NBRC 100139 / OT-3).